Consider the following 349-residue polypeptide: MGFSPSFSCSAIGALILGCLLLQASNSNAQLRPDFYFGTCPFVFDIIGNIIVDELQTDPRIAASLLRLHFHDCFVRGCDASILLDNSTSFRTEKDAAPNANSARGFNVIDRMKVALERACPGRVSCADILTIASQISVLLSGGPWWPVPLGRRDSVEAFFALANTALPSPFFNLTQLKTAFADVGLNRTSDLVALSGGHTFGRAQCQFVTPRLYNFNGTNSPDPSLNPTYLVELRRLCPQNGNGTVLVNFDVVTPDAFDSQYYTNLRNGKGLIQSDQELFSTPGADTIPLVNQYSSDMSVFFRAFIDAMIRMGNLRPLTGTQGEIRQNCRVVNPRIRVVENDDGVVSSI.

A signal peptide spans 1-29 (MGFSPSFSCSAIGALILGCLLLQASNSNA). Gln30 carries the pyrrolidone carboxylic acid modification. 4 disulfides stabilise this stretch: Cys40-Cys120, Cys73-Cys78, Cys126-Cys329, and Cys206-Cys238. His71 serves as the catalytic Proton acceptor. Ca(2+) contacts are provided by Asp72, Val75, Gly77, Asp79, and Ser81. Asn86 carries an N-linked (GlcNAc...) asparagine glycan. Pro168 is a binding site for substrate. Residues Asn173 and Asn187 are each glycosylated (N-linked (GlcNAc...) asparagine). His199 contacts heme b. Residue Thr200 participates in Ca(2+) binding. N-linked (GlcNAc...) asparagine glycans are attached at residues Asn217 and Asn243. Residues Asp251, Thr254, and Asp259 each coordinate Ca(2+).

The protein belongs to the peroxidase family. Classical plant (class III) peroxidase subfamily. It depends on heme b as a cofactor. The cofactor is Ca(2+). As to expression, mainly expressed in roots.

It localises to the secreted. The protein localises to the vacuole. The enzyme catalyses 2 a phenolic donor + H2O2 = 2 a phenolic radical donor + 2 H2O. Functionally, removal of H(2)O(2), oxidation of toxic reductants, biosynthesis and degradation of lignin, suberization, auxin catabolism, response to environmental stresses such as wounding, pathogen attack and oxidative stress. These functions might be dependent on each isozyme/isoform in each plant tissue. This is Peroxidase 22 (PER22) from Arabidopsis thaliana (Mouse-ear cress).